Reading from the N-terminus, the 477-residue chain is Glycogen synthase (477 aa).

Lys-15 is an ADP-alpha-D-glucose binding site.

The protein belongs to the glycosyltransferase 1 family. Bacterial/plant glycogen synthase subfamily.

It carries out the reaction [(1-&gt;4)-alpha-D-glucosyl](n) + ADP-alpha-D-glucose = [(1-&gt;4)-alpha-D-glucosyl](n+1) + ADP + H(+). The protein operates within glycan biosynthesis; glycogen biosynthesis. Functionally, synthesizes alpha-1,4-glucan chains using ADP-glucose. In Anaeromyxobacter dehalogenans (strain 2CP-1 / ATCC BAA-258), this protein is Glycogen synthase.